We begin with the raw amino-acid sequence, 948 residues long: ELKS/Rab6-interacting/CAST family member 1 (948 aa).

Residues M1–L54 form a disordered region. K10 carries the post-translational modification N6-acetyllysine. A compositionally biased stretch (low complexity) spans P13–P28. 3 positions are modified to phosphoserine: S17, S21, and S37. T38 is modified (phosphothreonine). Residues G40–G51 show a composition bias toward gly residues. S55, S75, S94, S796, and S937 each carry phosphoserine. A coiled-coil region spans residues R144–E920. Basic and acidic residues predominate over residues K773–S796. 2 disordered regions span residues K773–S801 and Q903–A948. The span at D939–A948 shows a compositional bias: acidic residues.

As to quaternary structure, interacts with the GTB-bound forms of RAB6A isoform 1 and isoform 2 and with RAB6B. The interaction was strongest with RAB6B, followed by RAB6A isoform 2 and weakest with RAB6A isoform 1. Part of a complex with CHUK, IKBKB and IKBKG. Interacts with CHUK, IKBKB and IKBKG. The interaction with IKBKG is independent of CHUK and IKBKB. Interacts with NFKBIA. Isoform 1 interacts through its C-terminus with the PDZ domains of RIMS1 and RIMS2. Interacts with ERC2/CAST1. Interacts with SDCCAG8. Part of a cortical microtubule stabilization complex (CMSC) composed of KANK1, PPFIA1, PPFIBP1, ERC1/ELKS, PHLDB2/LL5beta, CLASPs, KIF21A and possibly additional interactors; within CMSCs KANK1 and PHLDB2/LL5beta appear to be the core components for targeting of microtubule-binding proteins KIF21A and CLASPs, whereas PPFIA1, PPFIBP1 and ERC1/ELKS serve as scaffolds for protein clustering. Isoform 1 is specifically expressed in brain. A further probable isoform is widely expressed outside of brain It is referred to as ERC1a by PubMed:12391317 and characterized by a C-terminus identical to that of isoforms 1 in human and mouse.

It localises to the cytoplasm. The protein localises to the cytoskeleton. Its subcellular location is the microtubule organizing center. The protein resides in the centrosome. It is found in the membrane. It localises to the golgi apparatus membrane. The protein localises to the presynaptic active zone. Its subcellular location is the cell projection. The protein resides in the podosome. Functionally, regulatory subunit of the IKK complex. Probably recruits IkappaBalpha/NFKBIA to the complex. May be involved in the organization of the cytomatrix at the nerve terminals active zone (CAZ) which regulates neurotransmitter release. May be involved in vesicle trafficking at the CAZ. May be involved in Rab-6 regulated endosomes to Golgi transport. This chain is ELKS/Rab6-interacting/CAST family member 1 (Erc1), found in Rattus norvegicus (Rat).